The following is a 947-amino-acid chain: Bifunctional glutamine synthetase adenylyltransferase/adenylyl-removing enzyme (947 aa).

An adenylyl removase region spans residues 1-440; the sequence is MTPLSSPLSQ…VFNELIGDDE (440 aa). The tract at residues 450-947 is adenylyl transferase; the sequence is SEPWREVWQD…ASWRKWLVAV (498 aa).

The protein belongs to the GlnE family. Mg(2+) is required as a cofactor.

The enzyme catalyses [glutamine synthetase]-O(4)-(5'-adenylyl)-L-tyrosine + phosphate = [glutamine synthetase]-L-tyrosine + ADP. It catalyses the reaction [glutamine synthetase]-L-tyrosine + ATP = [glutamine synthetase]-O(4)-(5'-adenylyl)-L-tyrosine + diphosphate. In terms of biological role, involved in the regulation of glutamine synthetase GlnA, a key enzyme in the process to assimilate ammonia. When cellular nitrogen levels are high, the C-terminal adenylyl transferase (AT) inactivates GlnA by covalent transfer of an adenylyl group from ATP to specific tyrosine residue of GlnA, thus reducing its activity. Conversely, when nitrogen levels are low, the N-terminal adenylyl removase (AR) activates GlnA by removing the adenylyl group by phosphorolysis, increasing its activity. The regulatory region of GlnE binds the signal transduction protein PII (GlnB) which indicates the nitrogen status of the cell. In Salmonella schwarzengrund (strain CVM19633), this protein is Bifunctional glutamine synthetase adenylyltransferase/adenylyl-removing enzyme.